The primary structure comprises 600 residues: ATP-dependent RNA helicase DDX55 (600 aa).

Residues 9 to 37 (WESLQVPLHPRVLGALRELGFPHMTPVQS) carry the Q motif motif. In terms of domain architecture, Helicase ATP-binding spans 40 to 223 (IPLFMKNKDV…RAGLRNPVRI (184 aa)). 53 to 60 (AVTGSGKT) is an ATP binding site. A DEAD box motif is present at residues 171 to 174 (DEAD). The Helicase C-terminal domain occupies 254 to 402 (KFNQLVHFLR…EMSLQRNTID (149 aa)). Residues 499–513 (LEQKRKERSENEGRK) are compositionally biased toward basic and acidic residues. The interval 499 to 551 (LEQKRKERSENEGRKKFIKNKAWSKQKAKKERKKKMNAKRKKDEGSDIDDEDM) is disordered. Positions 514–538 (KFIKNKAWSKQKAKKERKKKMNAKR) are enriched in basic residues. An important for nuclear localization region spans residues 533–562 (KMNAKRKKDEGSDIDDEDMEELLNDTRLLK). Phosphoserine is present on residues Ser544 and Ser594.

It belongs to the DEAD box helicase family. DDX55/SPB4 subfamily. As to quaternary structure, interacts with 28S rRNA. Interacts with double-stranded RNA substrates in vitro; the interaction stimulates ATPase activity.

It is found in the nucleus. The protein localises to the nucleoplasm. The enzyme catalyses ATP + H2O = ADP + phosphate + H(+). Probable ATP-binding RNA helicase. Has ATPase activity and is involved in the maturation of precursor large subunit rRNAs. In Mus musculus (Mouse), this protein is ATP-dependent RNA helicase DDX55 (Ddx55).